The primary structure comprises 383 residues: Chromatin structure-remodeling complex subunit SFH1 (383 aa).

The interval 61-80 (DDDEKVHSDNGKGEGEEVGH) is disordered. Basic and acidic residues predominate over residues 64–80 (EKVHSDNGKGEGEEVGH).

It belongs to the SNF5 family.

It is found in the nucleus. Functionally, part of the chromatin structure-remodeling complex (RSC) which is involved in transcription regulation and nucleosome positioning. RSC is responsible for the transfer of a histone octamer from a nucleosome core particle to naked DNA. The reaction requires ATP and involves an activated RSC-nucleosome intermediate. Remodeling reaction also involves DNA translocation, DNA twist and conformational change. As a reconfigurer of centromeric and flanking nucleosomes, RSC complex is required both for proper kinetochore function in chromosome segregation and, via a PKC1-dependent signaling pathway, for organization of the cellular cytoskeleton. This subunit is essential for mitotic growth and required for cell cycle progression. This Eremothecium gossypii (strain ATCC 10895 / CBS 109.51 / FGSC 9923 / NRRL Y-1056) (Yeast) protein is Chromatin structure-remodeling complex subunit SFH1 (SFH1).